We begin with the raw amino-acid sequence, 415 residues long: Elongation factor Tu, chloroplastic (415 aa).

One can recognise a tr-type G domain in the interval 13–217 (KIHLNVGTIG…HLDLYLPTPR (205 aa)). The segment at 22 to 29 (GHFSHGKT) is G1. 22–29 (GHFSHGKT) provides a ligand contact to GTP. Position 29 (T29) interacts with Mg(2+). The G2 stretch occupies residues 63-67 (NMSIY). The G3 stretch occupies residues 84 to 87 (DCPG). GTP-binding positions include 84-88 (DCPGH) and 139-142 (NKED). Positions 139-142 (NKED) are G4. A G5 region spans residues 177 to 179 (SAL).

It belongs to the TRAFAC class translation factor GTPase superfamily. Classic translation factor GTPase family. EF-Tu/EF-1A subfamily.

The protein localises to the plastid. It localises to the chloroplast. The enzyme catalyses GTP + H2O = GDP + phosphate + H(+). Functionally, GTP hydrolase that promotes the GTP-dependent binding of aminoacyl-tRNA to the A-site of ribosomes during protein biosynthesis. The chain is Elongation factor Tu, chloroplastic (tufA) from Coleochaete orbicularis (Charophycean green alga).